Here is a 78-residue protein sequence, read N- to C-terminus: MVPIVGLIAKSAVNTPRLLYRYLFRCCDRLPEDAKGHYKHHVRQGFNSHEDETDPERIQQIIKKALEDADWILNKVRS.

The protein belongs to the complex I LYR family. LYRM9 subfamily.

This chain is LYR motif-containing protein 9 (LYRM9), found in Branchiostoma floridae (Florida lancelet).